Here is a 195-residue protein sequence, read N- to C-terminus: Putative NADH dehydrogenase/NAD(P)H nitroreductase Bcep18194_B1060 (195 aa).

Belongs to the nitroreductase family. HadB/RutE subfamily. Requires FMN as cofactor.

In Burkholderia lata (strain ATCC 17760 / DSM 23089 / LMG 22485 / NCIMB 9086 / R18194 / 383), this protein is Putative NADH dehydrogenase/NAD(P)H nitroreductase Bcep18194_B1060.